We begin with the raw amino-acid sequence, 426 residues long: Kelch repeat-containing protein At3g27220 (426 aa).

Residues 18 to 38 (LMLVLYFTSVLGIGFIAAFLC) traverse the membrane as a helical segment. Kelch repeat units lie at residues 123–170 (LLYV…IVTD), 173–222 (YVYV…IWRG), 224–275 (LHVM…VAND), 276–338 (KLLV…WIIV), and 341–394 (SIVI…FWNG).

It is found in the membrane. The sequence is that of Kelch repeat-containing protein At3g27220 from Arabidopsis thaliana (Mouse-ear cress).